The sequence spans 88 residues: Small ribosomal subunit protein uS15 (88 aa).

The protein belongs to the universal ribosomal protein uS15 family. Part of the 30S ribosomal subunit. Forms a bridge to the 50S subunit in the 70S ribosome, contacting the 23S rRNA.

In terms of biological role, one of the primary rRNA binding proteins, it binds directly to 16S rRNA where it helps nucleate assembly of the platform of the 30S subunit by binding and bridging several RNA helices of the 16S rRNA. Functionally, forms an intersubunit bridge (bridge B4) with the 23S rRNA of the 50S subunit in the ribosome. This is Small ribosomal subunit protein uS15 from Halothermothrix orenii (strain H 168 / OCM 544 / DSM 9562).